Consider the following 98-residue polypeptide: MARSIKKGPFADKHLTKKVEDANKGNKKSVIKTWSRRSTILPDFVGHTFAVHNGRKFVPVFVTENMVGHKLGEFAPTRTFHGHSAEKKAAAAPGPAKK.

2 disordered regions span residues 1-30 (MARSIKKGPFADKHLTKKVEDANKGNKKSV) and 78-98 (RTFHGHSAEKKAAAAPGPAKK). A compositionally biased stretch (basic and acidic residues) spans 9–24 (PFADKHLTKKVEDANK).

It belongs to the universal ribosomal protein uS19 family.

In terms of biological role, protein S19 forms a complex with S13 that binds strongly to the 16S ribosomal RNA. This is Small ribosomal subunit protein uS19 from Anaeromyxobacter dehalogenans (strain 2CP-C).